The following is a 134-amino-acid chain: ATP synthase epsilon chain, chloroplastic (134 aa).

Belongs to the ATPase epsilon chain family. F-type ATPases have 2 components, CF(1) - the catalytic core - and CF(0) - the membrane proton channel. CF(1) has five subunits: alpha(3), beta(3), gamma(1), delta(1), epsilon(1). CF(0) has three main subunits: a, b and c.

It localises to the plastid. Its subcellular location is the chloroplast thylakoid membrane. Functionally, produces ATP from ADP in the presence of a proton gradient across the membrane. The polypeptide is ATP synthase epsilon chain, chloroplastic (Amborella trichopoda).